The sequence spans 1274 residues: RNA-directed RNA polymerase VP2 (1274 aa).

The RdRp catalytic domain maps to 561 to 798 (LSTTSGSVVT…KLYALMGCRI (238 aa)).

Belongs to the reoviridae RNA-directed RNA polymerase family.

It localises to the virion. The enzyme catalyses RNA(n) + a ribonucleoside 5'-triphosphate = RNA(n+1) + diphosphate. Its function is as follows. RNA-directed RNA polymerase that is involved in transcription and genome replication. Following infection, it catalyzes the synthesis of fully conservative plus strands. After core assembly, which consists in recruitment of one capped plus-strand for each genomic segments and polymerase complexes, the polymerase switches mode and catalyzes the synthesis of complementary minus-strands. In Aquareovirus C (isolate Golden shiner/USA/GSRV/1977) (AQRV-C), this protein is RNA-directed RNA polymerase VP2 (S2).